Reading from the N-terminus, the 664-residue chain is Translation factor guf1, mitochondrial (664 aa).

The N-terminal 43 residues, 1–43 (MRGCLQLARWLSAAPKGTAASLTRAPFGLANATRFFTNSAARA), are a transit peptide targeting the mitochondrion. Positions 66 to 246 (ERYRNFCIVA…TVVDKIPAPI (181 aa)) constitute a tr-type G domain. GTP-binding positions include 75–82 (AHVDHGKS), 139–143 (DTPGH), and 193–196 (NKVD).

The protein belongs to the TRAFAC class translation factor GTPase superfamily. Classic translation factor GTPase family. LepA subfamily.

Its subcellular location is the mitochondrion inner membrane. The catalysed reaction is GTP + H2O = GDP + phosphate + H(+). Promotes mitochondrial protein synthesis. May act as a fidelity factor of the translation reaction, by catalyzing a one-codon backward translocation of tRNAs on improperly translocated ribosomes. Binds to mitochondrial ribosomes in a GTP-dependent manner. The chain is Translation factor guf1, mitochondrial (guf1) from Aspergillus clavatus (strain ATCC 1007 / CBS 513.65 / DSM 816 / NCTC 3887 / NRRL 1 / QM 1276 / 107).